A 385-amino-acid chain; its full sequence is Flap endonuclease 1 (385 aa).

The tract at residues M1 to R104 is N-domain. D34 serves as a coordination point for Mg(2+). Residues R47 and R70 each coordinate DNA. Residues D86, E158, E160, D179, and D181 each contribute to the Mg(2+) site. Residues G122–Y253 are I-domain. E158 contributes to the DNA binding site. Residues G231 and D233 each contribute to the DNA site. D233 provides a ligand contact to Mg(2+). The tract at residues T336 to F344 is interaction with PCNA. The segment at T346–K385 is disordered. Positions A368–K385 are enriched in basic residues.

Belongs to the XPG/RAD2 endonuclease family. FEN1 subfamily. In terms of assembly, interacts with PCNA. Three molecules of FEN1 bind to one PCNA trimer with each molecule binding to one PCNA monomer. PCNA stimulates the nuclease activity without altering cleavage specificity. It depends on Mg(2+) as a cofactor. Post-translationally, phosphorylated. Phosphorylation upon DNA damage induces relocalization to the nuclear plasma.

The protein localises to the nucleus. Its subcellular location is the nucleolus. It is found in the nucleoplasm. It localises to the mitochondrion. Its function is as follows. Structure-specific nuclease with 5'-flap endonuclease and 5'-3' exonuclease activities involved in DNA replication and repair. During DNA replication, cleaves the 5'-overhanging flap structure that is generated by displacement synthesis when DNA polymerase encounters the 5'-end of a downstream Okazaki fragment. It enters the flap from the 5'-end and then tracks to cleave the flap base, leaving a nick for ligation. Also involved in the long patch base excision repair (LP-BER) pathway, by cleaving within the apurinic/apyrimidinic (AP) site-terminated flap. Acts as a genome stabilization factor that prevents flaps from equilibrating into structures that lead to duplications and deletions. Also possesses 5'-3' exonuclease activity on nicked or gapped double-stranded DNA, and exhibits RNase H activity. Also involved in replication and repair of rDNA and in repairing mitochondrial DNA. The polypeptide is Flap endonuclease 1 (Drosophila melanogaster (Fruit fly)).